Reading from the N-terminus, the 459-residue chain is tRNA modification GTPase MnmE (459 aa).

Residues R21, E84, and K123 each contribute to the (6S)-5-formyl-5,6,7,8-tetrahydrofolate site. The region spanning 219 to 380 is the TrmE-type G domain; the sequence is GMLTVIVGQP…LEKEIKQRVY (162 aa). N229 contacts K(+). Residues 229-234, 248-254, and 273-276 contribute to the GTP site; these read NVGKSS, TDIPGTT, and DTAG. Position 233 (S233) interacts with Mg(2+). Residues T248, I250, and T253 each coordinate K(+). T254 contacts Mg(2+). K459 provides a ligand contact to (6S)-5-formyl-5,6,7,8-tetrahydrofolate.

It belongs to the TRAFAC class TrmE-Era-EngA-EngB-Septin-like GTPase superfamily. TrmE GTPase family. As to quaternary structure, homodimer. Heterotetramer of two MnmE and two MnmG subunits. K(+) is required as a cofactor.

Its subcellular location is the cytoplasm. Its function is as follows. Exhibits a very high intrinsic GTPase hydrolysis rate. Involved in the addition of a carboxymethylaminomethyl (cmnm) group at the wobble position (U34) of certain tRNAs, forming tRNA-cmnm(5)s(2)U34. This is tRNA modification GTPase MnmE from Desulfitobacterium hafniense (strain Y51).